The primary structure comprises 165 residues: MTRVLGIDPGSRVTGYGILDWTGKPVLVAAGCIRTETDDFPERLRRIFEGISRIVEEFRPEEMAVEQVFMHKNADSALKLGQARGAAICAGVAHGLPVHEYAARQVKLALVGKGSADKAQVQHMVCFLLGQAGPLALDASDALGVAFCHLHHRQTLSRMSRMVRR.

Residues D8, E66, and D138 contribute to the active site. Residues D8, E66, and D138 each coordinate Mg(2+).

This sequence belongs to the RuvC family. As to quaternary structure, homodimer which binds Holliday junction (HJ) DNA. The HJ becomes 2-fold symmetrical on binding to RuvC with unstacked arms; it has a different conformation from HJ DNA in complex with RuvA. In the full resolvosome a probable DNA-RuvA(4)-RuvB(12)-RuvC(2) complex forms which resolves the HJ. Mg(2+) is required as a cofactor.

Its subcellular location is the cytoplasm. It carries out the reaction Endonucleolytic cleavage at a junction such as a reciprocal single-stranded crossover between two homologous DNA duplexes (Holliday junction).. Its function is as follows. The RuvA-RuvB-RuvC complex processes Holliday junction (HJ) DNA during genetic recombination and DNA repair. Endonuclease that resolves HJ intermediates. Cleaves cruciform DNA by making single-stranded nicks across the HJ at symmetrical positions within the homologous arms, yielding a 5'-phosphate and a 3'-hydroxyl group; requires a central core of homology in the junction. The consensus cleavage sequence is 5'-(A/T)TT(C/G)-3'. Cleavage occurs on the 3'-side of the TT dinucleotide at the point of strand exchange. HJ branch migration catalyzed by RuvA-RuvB allows RuvC to scan DNA until it finds its consensus sequence, where it cleaves and resolves the cruciform DNA. This is Crossover junction endodeoxyribonuclease RuvC from Methylococcus capsulatus (strain ATCC 33009 / NCIMB 11132 / Bath).